A 304-amino-acid polypeptide reads, in one-letter code: Acetylglutamate kinase (304 aa).

Substrate-binding positions include 82-83, arginine 104, and asparagine 197; that span reads GG.

Belongs to the acetylglutamate kinase family. ArgB subfamily.

Its subcellular location is the cytoplasm. The enzyme catalyses N-acetyl-L-glutamate + ATP = N-acetyl-L-glutamyl 5-phosphate + ADP. It participates in amino-acid biosynthesis; L-arginine biosynthesis; N(2)-acetyl-L-ornithine from L-glutamate: step 2/4. Functionally, catalyzes the ATP-dependent phosphorylation of N-acetyl-L-glutamate. This chain is Acetylglutamate kinase, found in Prochlorococcus marinus (strain NATL1A).